Reading from the N-terminus, the 368-residue chain is tRNA/tmRNA (uracil-C(5))-methyltransferase (368 aa).

Gln192, Tyr220, Asn225, Glu241, and Asp301 together coordinate S-adenosyl-L-methionine. Cys326 acts as the Nucleophile in catalysis. Glu360 serves as the catalytic Proton acceptor.

It belongs to the class I-like SAM-binding methyltransferase superfamily. RNA M5U methyltransferase family. TrmA subfamily.

The enzyme catalyses uridine(54) in tRNA + S-adenosyl-L-methionine = 5-methyluridine(54) in tRNA + S-adenosyl-L-homocysteine + H(+). The catalysed reaction is uridine(341) in tmRNA + S-adenosyl-L-methionine = 5-methyluridine(341) in tmRNA + S-adenosyl-L-homocysteine + H(+). In terms of biological role, dual-specificity methyltransferase that catalyzes the formation of 5-methyluridine at position 54 (m5U54) in all tRNAs, and that of position 341 (m5U341) in tmRNA (transfer-mRNA). This is tRNA/tmRNA (uracil-C(5))-methyltransferase from Actinobacillus pleuropneumoniae serotype 7 (strain AP76).